Consider the following 387-residue polypeptide: Acetylornithine aminotransferase (387 aa).

Pyridoxal 5'-phosphate-binding positions include 97-98 (GT) and phenylalanine 130. Arginine 133 contributes to the N(2)-acetyl-L-ornithine binding site. 215 to 218 (DEVQ) is a binding site for pyridoxal 5'-phosphate. Lysine 244 carries the N6-(pyridoxal phosphate)lysine modification. Threonine 273 is a pyridoxal 5'-phosphate binding site.

This sequence belongs to the class-III pyridoxal-phosphate-dependent aminotransferase family. ArgD subfamily. In terms of assembly, homodimer. Requires pyridoxal 5'-phosphate as cofactor.

Its subcellular location is the cytoplasm. The catalysed reaction is N(2)-acetyl-L-ornithine + 2-oxoglutarate = N-acetyl-L-glutamate 5-semialdehyde + L-glutamate. Its pathway is amino-acid biosynthesis; L-arginine biosynthesis; N(2)-acetyl-L-ornithine from L-glutamate: step 4/4. This is Acetylornithine aminotransferase from Clostridium acetobutylicum (strain ATCC 824 / DSM 792 / JCM 1419 / IAM 19013 / LMG 5710 / NBRC 13948 / NRRL B-527 / VKM B-1787 / 2291 / W).